Reading from the N-terminus, the 280-residue chain is UDP-3-O-acyl-N-acetylglucosamine deacetylase (280 aa).

3 residues coordinate Zn(2+): His79, His237, and Asp241. Catalysis depends on His264, which acts as the Proton donor.

The protein belongs to the LpxC family. The cofactor is Zn(2+).

It catalyses the reaction a UDP-3-O-[(3R)-3-hydroxyacyl]-N-acetyl-alpha-D-glucosamine + H2O = a UDP-3-O-[(3R)-3-hydroxyacyl]-alpha-D-glucosamine + acetate. Its pathway is glycolipid biosynthesis; lipid IV(A) biosynthesis; lipid IV(A) from (3R)-3-hydroxytetradecanoyl-[acyl-carrier-protein] and UDP-N-acetyl-alpha-D-glucosamine: step 2/6. Catalyzes the hydrolysis of UDP-3-O-myristoyl-N-acetylglucosamine to form UDP-3-O-myristoylglucosamine and acetate, the committed step in lipid A biosynthesis. This Chlamydia caviae (strain ATCC VR-813 / DSM 19441 / 03DC25 / GPIC) (Chlamydophila caviae) protein is UDP-3-O-acyl-N-acetylglucosamine deacetylase.